A 264-amino-acid chain; its full sequence is Thymidylate synthase (264 aa).

Arginine 21 serves as a coordination point for dUMP. Histidine 51 contacts (6R)-5,10-methylene-5,6,7,8-tetrahydrofolate. 126 to 127 (RR) is a dUMP binding site. Catalysis depends on cysteine 146, which acts as the Nucleophile. DUMP is bound by residues 166–169 (RSAD), asparagine 177, and 207–209 (HLY). Aspartate 169 is a (6R)-5,10-methylene-5,6,7,8-tetrahydrofolate binding site. Serine 263 serves as a coordination point for (6R)-5,10-methylene-5,6,7,8-tetrahydrofolate.

This sequence belongs to the thymidylate synthase family. Bacterial-type ThyA subfamily. In terms of assembly, homodimer.

The protein localises to the cytoplasm. It carries out the reaction dUMP + (6R)-5,10-methylene-5,6,7,8-tetrahydrofolate = 7,8-dihydrofolate + dTMP. It participates in pyrimidine metabolism; dTTP biosynthesis. Its function is as follows. Catalyzes the reductive methylation of 2'-deoxyuridine-5'-monophosphate (dUMP) to 2'-deoxythymidine-5'-monophosphate (dTMP) while utilizing 5,10-methylenetetrahydrofolate (mTHF) as the methyl donor and reductant in the reaction, yielding dihydrofolate (DHF) as a by-product. This enzymatic reaction provides an intracellular de novo source of dTMP, an essential precursor for DNA biosynthesis. The chain is Thymidylate synthase from Neisseria meningitidis serogroup B (strain ATCC BAA-335 / MC58).